The chain runs to 184 residues: ATP synthase subunit b, chloroplastic (184 aa).

A helical transmembrane segment spans residues 29-49; sequence INIINLGIVIGLLVYLGEGVL.

The protein belongs to the ATPase B chain family. F-type ATPases have 2 components, F(1) - the catalytic core - and F(0) - the membrane proton channel. F(1) has five subunits: alpha(3), beta(3), gamma(1), delta(1), epsilon(1). F(0) has four main subunits: a(1), b(1), b'(1) and c(10-14). The alpha and beta chains form an alternating ring which encloses part of the gamma chain. F(1) is attached to F(0) by a central stalk formed by the gamma and epsilon chains, while a peripheral stalk is formed by the delta, b and b' chains.

It localises to the plastid. Its subcellular location is the chloroplast thylakoid membrane. Its function is as follows. F(1)F(0) ATP synthase produces ATP from ADP in the presence of a proton or sodium gradient. F-type ATPases consist of two structural domains, F(1) containing the extramembraneous catalytic core and F(0) containing the membrane proton channel, linked together by a central stalk and a peripheral stalk. During catalysis, ATP synthesis in the catalytic domain of F(1) is coupled via a rotary mechanism of the central stalk subunits to proton translocation. In terms of biological role, component of the F(0) channel, it forms part of the peripheral stalk, linking F(1) to F(0). This is ATP synthase subunit b, chloroplastic from Psilotum nudum (Whisk fern).